The chain runs to 120 residues: NADH-quinone oxidoreductase subunit A (120 aa).

The next 3 membrane-spanning stretches (helical) occupy residues tyrosine 6–threonine 26, phenylalanine 63–alanine 83, and leucine 89–tryptophan 109.

It belongs to the complex I subunit 3 family. NDH-1 is composed of 14 different subunits. Subunits NuoA, H, J, K, L, M, N constitute the membrane sector of the complex.

It is found in the cell membrane. The enzyme catalyses a quinone + NADH + 5 H(+)(in) = a quinol + NAD(+) + 4 H(+)(out). Functionally, NDH-1 shuttles electrons from NADH, via FMN and iron-sulfur (Fe-S) centers, to quinones in the respiratory chain. The immediate electron acceptor for the enzyme in this species is believed to be a menaquinone. Couples the redox reaction to proton translocation (for every two electrons transferred, four hydrogen ions are translocated across the cytoplasmic membrane), and thus conserves the redox energy in a proton gradient. The polypeptide is NADH-quinone oxidoreductase subunit A (Moorella thermoacetica (strain ATCC 39073 / JCM 9320)).